We begin with the raw amino-acid sequence, 299 residues long: Ankyrin repeat domain-containing protein 54 (299 aa).

The interval 1–32 is disordered; it reads MAAAAGGADDESRSGRSSSDGECAVAPEPLTG. Residue Ala-2 is modified to N-acetylalanine. Residues Ser-57 and Ser-62 each carry the phosphoserine modification. Positions 98 to 116 match the Nuclear localization signal (NLS) motif; that stretch reads RRLGPTGKEVHALKRLRDS. 4 ANK repeats span residues 108-137, 141-170, 174-203, and 207-239; these read HALKRLRDSANANDVETVQQLLEEGTDPCA, KGRTALHFASCNGNDQIVQLLLDHGADPNQ, LGNTPLHLAACTNHAPVITTLLRGGARVDA, and AGRTPLHLAKSKLNILQEGHSQCLEAVRLEVKQ. The segment at 140 to 240 is LYN-binding; that stretch reads DKGRTALHFA…EAVRLEVKQI (101 aa). The short motif at 282 to 292 is the Nuclear export signal (NES) element; that stretch reads LLASFTSLSLQ.

As to quaternary structure, interacts (via ankyrin repeat region) with LYN (via SH3-domain) in an activation-independent status of LYN. Forms a multiprotein complex with LYN and HCLS1. Interacts with TSN2, VAV1, DBNL and LASP1.

Its subcellular location is the nucleus. It is found in the cytoplasm. It localises to the midbody. In terms of biological role, plays an important role in regulating intracellular signaling events associated with erythroid terminal differentiation. The protein is Ankyrin repeat domain-containing protein 54 (ANKRD54) of Bos taurus (Bovine).